We begin with the raw amino-acid sequence, 565 residues long: Urocanate hydratase (565 aa).

NAD(+) is bound by residues 61–62, Gln-139, 185–187, Glu-205, Arg-210, 251–252, 272–276, 282–283, and Tyr-331; these read GG, GMG, NA, QTSAH, and YL. The active site involves Cys-419. Residues 453 to 472 form a disordered region; that stretch reads LDSGSVASPNRETESMRDGS. Basic and acidic residues predominate over residues 463–472; that stretch reads RETESMRDGS. NAD(+) is bound at residue Gly-501.

The protein belongs to the urocanase family. NAD(+) is required as a cofactor.

The protein localises to the cytoplasm. It carries out the reaction 4-imidazolone-5-propanoate = trans-urocanate + H2O. It participates in amino-acid degradation; L-histidine degradation into L-glutamate; N-formimidoyl-L-glutamate from L-histidine: step 2/3. Catalyzes the conversion of urocanate to 4-imidazolone-5-propionate. This chain is Urocanate hydratase, found in Pseudomonas syringae pv. tomato (strain ATCC BAA-871 / DC3000).